Here is a 409-residue protein sequence, read N- to C-terminus: ORC1-type DNA replication protein 1 (409 aa).

Residues 63–67, Tyr206, and Arg218 contribute to the ATP site; that span reads TGKTA.

The protein belongs to the CDC6/cdc18 family.

In terms of biological role, involved in regulation of DNA replication. The sequence is that of ORC1-type DNA replication protein 1 (cdc6-1) from Archaeoglobus fulgidus (strain ATCC 49558 / DSM 4304 / JCM 9628 / NBRC 100126 / VC-16).